The following is a 503-amino-acid chain: Lanosterol 14-alpha demethylase (503 aa).

A helical transmembrane segment spans residues 24 to 44 (GNLLSTLLIACAFTLSLVYLF). C449 contributes to the heme binding site.

Belongs to the cytochrome P450 family. The cofactor is heme. Post-translationally, ubiquitinated by MARCHF6, leading to proteasomal degradation.

The protein localises to the endoplasmic reticulum membrane. The protein resides in the microsome membrane. The enzyme catalyses a 14alpha-methyl steroid + 3 reduced [NADPH--hemoprotein reductase] + 3 O2 = a Delta(14) steroid + formate + 3 oxidized [NADPH--hemoprotein reductase] + 4 H2O + 4 H(+). It carries out the reaction lanosterol + 3 reduced [NADPH--hemoprotein reductase] + 3 O2 = 4,4-dimethyl-5alpha-cholesta-8,14,24-trien-3beta-ol + formate + 3 oxidized [NADPH--hemoprotein reductase] + 4 H2O + 4 H(+). It catalyses the reaction 24,25-dihydrolanosterol + 3 reduced [NADPH--hemoprotein reductase] + 3 O2 = 4,4-dimethyl-8,14-cholestadien-3beta-ol + formate + 3 oxidized [NADPH--hemoprotein reductase] + 4 H2O + 4 H(+). The catalysed reaction is a 14alpha-methyl steroid + reduced [NADPH--hemoprotein reductase] + O2 = a 14alpha-hydroxymethyl steroid + oxidized [NADPH--hemoprotein reductase] + H2O + H(+). The enzyme catalyses a 14alpha-hydroxymethyl steroid + reduced [NADPH--hemoprotein reductase] + O2 = a 14alpha-formyl steroid + oxidized [NADPH--hemoprotein reductase] + 2 H2O + H(+). It carries out the reaction a 14alpha-formyl steroid + reduced [NADPH--hemoprotein reductase] + O2 = a Delta(14) steroid + formate + oxidized [NADPH--hemoprotein reductase] + H2O + 2 H(+). It catalyses the reaction lanosterol + reduced [NADPH--hemoprotein reductase] + O2 = 32-hydroxylanosterol + oxidized [NADPH--hemoprotein reductase] + H2O + H(+). The catalysed reaction is 32-hydroxylanosterol + reduced [NADPH--hemoprotein reductase] + O2 = 32-oxolanosterol + oxidized [NADPH--hemoprotein reductase] + 2 H2O + H(+). The enzyme catalyses 32-oxolanosterol + reduced [NADPH--hemoprotein reductase] + O2 = 4,4-dimethyl-5alpha-cholesta-8,14,24-trien-3beta-ol + formate + oxidized [NADPH--hemoprotein reductase] + H2O + 2 H(+). It carries out the reaction 24,25-dihydrolanosterol + reduced [NADPH--hemoprotein reductase] + O2 = 32-hydroxy-24,25-dihydrolanosterol + oxidized [NADPH--hemoprotein reductase] + H2O + H(+). It catalyses the reaction 32-hydroxy-24,25-dihydrolanosterol + reduced [NADPH--hemoprotein reductase] + O2 = 32-oxo-24,25-dihydrolanosterol + oxidized [NADPH--hemoprotein reductase] + 2 H2O + H(+). The catalysed reaction is 32-oxo-24,25-dihydrolanosterol + reduced [NADPH--hemoprotein reductase] + O2 = 4,4-dimethyl-8,14-cholestadien-3beta-ol + formate + oxidized [NADPH--hemoprotein reductase] + H2O + 2 H(+). The protein operates within steroid biosynthesis; zymosterol biosynthesis; zymosterol from lanosterol: step 1/6. Inhibited by azalanstat. Inhibited by azole antifungal agents ketoconazole, itraconazole and fluconazole. In terms of biological role, sterol 14alpha-demethylase that plays a critical role in the cholesterol biosynthesis pathway, being cholesterol the major sterol component in mammalian membranes as well as a precursor for bile acid and steroid hormone synthesis. Cytochrome P450 monooxygenase that catalyzes the three-step oxidative removal of the 14alpha-methyl group (C-32) of sterols such as lanosterol (lanosta-8,24-dien-3beta-ol) and 24,25-dihydrolanosterol (DHL) in the form of formate, and converts the sterols to 4,4-dimethyl-5alpha-cholesta-8,14,24-trien-3beta-ol and 4,4-dimethyl-8,14-cholestadien-3beta-ol, respectively, which are intermediates of cholesterol biosynthesis. Can also demethylate substrates not intrinsic to mammals, such as eburicol (24-methylene-24,25-dihydrolanosterol), but at a lower rate than DHL. The protein is Lanosterol 14-alpha demethylase of Mus musculus (Mouse).